Consider the following 502-residue polypeptide: ATP synthase subunit alpha (502 aa).

169–176 contacts ATP; that stretch reads GDRQTGKT.

The protein belongs to the ATPase alpha/beta chains family. In terms of assembly, F-type ATPases have 2 components, CF(1) - the catalytic core - and CF(0) - the membrane proton channel. CF(1) has five subunits: alpha(3), beta(3), gamma(1), delta(1), epsilon(1). CF(0) has three main subunits: a(1), b(2) and c(9-12). The alpha and beta chains form an alternating ring which encloses part of the gamma chain. CF(1) is attached to CF(0) by a central stalk formed by the gamma and epsilon chains, while a peripheral stalk is formed by the delta and b chains.

The protein localises to the cell membrane. It catalyses the reaction ATP + H2O + 4 H(+)(in) = ADP + phosphate + 5 H(+)(out). Its function is as follows. Produces ATP from ADP in the presence of a proton gradient across the membrane. The alpha chain is a regulatory subunit. In Staphylococcus aureus (strain bovine RF122 / ET3-1), this protein is ATP synthase subunit alpha.